The primary structure comprises 317 residues: Acetyl-coenzyme A carboxylase carboxyl transferase subunit alpha (317 aa).

The region spanning 33-294 is the CoA carboxyltransferase C-terminal domain; sequence NLDDEIARLQ…KQRLLDDLKE (262 aa).

Belongs to the AccA family. In terms of assembly, acetyl-CoA carboxylase is a heterohexamer composed of biotin carboxyl carrier protein (AccB), biotin carboxylase (AccC) and two subunits each of ACCase subunit alpha (AccA) and ACCase subunit beta (AccD).

The protein localises to the cytoplasm. The enzyme catalyses N(6)-carboxybiotinyl-L-lysyl-[protein] + acetyl-CoA = N(6)-biotinyl-L-lysyl-[protein] + malonyl-CoA. It participates in lipid metabolism; malonyl-CoA biosynthesis; malonyl-CoA from acetyl-CoA: step 1/1. In terms of biological role, component of the acetyl coenzyme A carboxylase (ACC) complex. First, biotin carboxylase catalyzes the carboxylation of biotin on its carrier protein (BCCP) and then the CO(2) group is transferred by the carboxyltransferase to acetyl-CoA to form malonyl-CoA. This Pasteurella multocida (strain Pm70) protein is Acetyl-coenzyme A carboxylase carboxyl transferase subunit alpha.